Consider the following 105-residue polypeptide: MNPSEMQRKAPPRRRRHCNRAPLTHKMNKMVTSEEEMKLPSTKKAEPLTWAQLKKLTQLATKCLENTKVTQTPESMLLAALMIVSMVSAGVTNSSKETATIENGP.

The disordered stretch occupies residues 1 to 43 (MNPSEMQRKAPPRRRRHCNRAPLTHKMNKMVTSEEEMKLPSTK). The span at 10-19 (APPRRRRHCN) shows a compositional bias: basic residues. The Nuclear localization signal motif lies at 13 to 20 (RRRRHCNR). The Nuclear export signal signature appears at 50–59 (WAQLKKLTQL).

Forms homodimers, homotrimers, and homotetramers via a C-terminal domain. Associates with XPO1 and with ZNF145.

Its subcellular location is the cytoplasm. It is found in the nucleus. The protein localises to the nucleolus. Its function is as follows. Retroviral replication requires the nuclear export and translation of unspliced, singly-spliced and multiply-spliced derivatives of the initial genomic transcript. Rec interacts with a highly structured RNA element (RcRE) present in the viral 3'LTR and recruits the cellular nuclear export machinery. This permits export to the cytoplasm of unspliced genomic or incompletely spliced subgenomic viral transcripts. This chain is Endogenous retrovirus group K member 104 Rec protein (HERV-K104), found in Homo sapiens (Human).